Here is a 580-residue protein sequence, read N- to C-terminus: Type 3 secretion system translocon protein SctE (580 aa).

IpgC chaperone binding domain regions lie at residues 15-45 and 51-72; these read KILTSTELGDNTIQAANDAANKLFSLTIADL and INTTNAHSTSNILIPELKAPKS. Positions 61 to 70 are mediates interaction with human MAD2L2; that stretch reads NILIPELKAP. A coiled-coil region spans residues 104 to 224; that stretch reads AWKSQQQARQ…MQLEKEIDSF (121 aa). Helical transmembrane passes span 313 to 333 and 399 to 419; these read ILGALLTIVSVVAAAFSGGAS and IGSILGAIAGALVLVAAVVLV.

Belongs to the SctE/SipB/YopB family. In terms of assembly, the core secretion machinery of the T3SS is composed of approximately 20 different proteins, including cytoplasmic components, a base, an export apparatus and a needle. This subunit is involved in the formation of a pore, called the translocon, in host membrane. Interacts with IpaC/SctB. Interacts with the needle tip protein IpaD/SctA. Interacts with the molecular chaperone IpgC, which prevents premature association with IpaC/SctB within the cytoplasm of Shigella cells and protects IpaB/SctE from proteolysis. Interacts with the host protein ICE in the cytoplasm of infected macrophages. Interacts with human MAD2L2 in the G2/M phase of the cell cycle.

It is found in the secreted. It localises to the host membrane. Its subcellular location is the host cell. The protein localises to the host nucleus. Its activity is regulated as follows. Interaction with the membrane is affected by the pH. IpaB/SctE is more efficient in destabilizing the membrane at pH 5.0 than at neutral pH. Functionally, component of the type III secretion system (T3SS), also called injectisome, which is used to inject bacterial effector proteins into eukaryotic host cells. IpaB/SctE and IpaC/SctB are inserted into the host membrane where they form a pore and allow the translocation of effector proteins into the cytosol of target cells. Interaction with IpaD/SctA at needle tips leads to the formation of the MxiH/SctF-IpaD/SctA-IpaB/SctE ternary complex, which is essential for host cell sensing. Interaction of IpaB/SctE with host membrane lipids promotes recruitment of IpaC/SctB at the needle tip concomitant with translocon insertion into the host membrane and type III secretion induction. In terms of biological role, required for efficient dissemination. Necessary for lysis of the two cellular membranes that surround bacteria in protrusions during cell-to-cell spread. Is sufficient to induce macrophage apoptosis through activation of the interleukin-1 beta converting enzyme (ICE) in infected macrophages. In epithelial cells, causes cell-cycle arrest by targeting host MAD2L2, an anaphase-promoting complex/cyclosome (APC) inhibitor. In Shigella flexneri, this protein is Type 3 secretion system translocon protein SctE.